A 598-amino-acid chain; its full sequence is Membrane protein insertase YidC (598 aa).

A helical transmembrane segment spans residues 7 to 27 (NYFIAIALSVLIVLGWQFLYM). The segment at 37–71 (AQEAQKAQQQTEQVQQPAAGGATPAPASGTAPSGQ) is disordered. Low complexity predominate over residues 40–71 (AQKAQQQTEQVQQPAAGGATPAPASGTAPSGQ). The next 4 helical transmembrane spans lie at 373–393 (FFGNFGVAILCTTIVVKALFF), 447–467 (WPVALQIPIFFSLYKVIYITI), 492–512 (LFGLLPFTAPTFLHLGVWPLI), and 538–558 (WMPLVFMFMLASFPAGLVIYW).

The protein belongs to the OXA1/ALB3/YidC family. Type 1 subfamily. As to quaternary structure, interacts with the Sec translocase complex via SecD. Specifically interacts with transmembrane segments of nascent integral membrane proteins during membrane integration.

It is found in the cell inner membrane. Its function is as follows. Required for the insertion and/or proper folding and/or complex formation of integral membrane proteins into the membrane. Involved in integration of membrane proteins that insert both dependently and independently of the Sec translocase complex, as well as at least some lipoproteins. Aids folding of multispanning membrane proteins. The protein is Membrane protein insertase YidC of Rhizobium etli (strain CIAT 652).